Consider the following 505-residue polypeptide: Cytochrome P450 4Z1 (505 aa).

The Cytoplasmic segment spans residues 1-9 (MEPSWLQEL). Residues 10-30 (MAHPFLLLILLCMSLLLFQVI) traverse the membrane as a helical; Signal-anchor for type II membrane protein segment. The Lumenal segment spans residues 31–505 (RLYQRRRWMI…GIHVFAKKVC (475 aa)). Cys452 is a heme binding site.

Belongs to the cytochrome P450 family. Requires heme as cofactor. Preferentially detected in breast carcinoma tissue and mammary gland, whereas only marginal expression is found in all other tested tissues.

Its subcellular location is the endoplasmic reticulum membrane. It is found in the microsome membrane. The catalysed reaction is an organic molecule + reduced [NADPH--hemoprotein reductase] + O2 = an alcohol + oxidized [NADPH--hemoprotein reductase] + H2O + H(+). The enzyme catalyses dodecanoate + reduced [NADPH--hemoprotein reductase] + O2 = 7-hydroxydodecanoate + oxidized [NADPH--hemoprotein reductase] + H2O + H(+). It carries out the reaction dodecanoate + reduced [NADPH--hemoprotein reductase] + O2 = 8-hydroxydodecanoate + oxidized [NADPH--hemoprotein reductase] + H2O + H(+). It catalyses the reaction dodecanoate + reduced [NADPH--hemoprotein reductase] + O2 = 9-hydroxydodecanoate + oxidized [NADPH--hemoprotein reductase] + H2O + H(+). The catalysed reaction is dodecanoate + reduced [NADPH--hemoprotein reductase] + O2 = 10-hydroxydodecanoate + oxidized [NADPH--hemoprotein reductase] + H2O + H(+). The enzyme catalyses dodecanoate + reduced [NADPH--hemoprotein reductase] + O2 = 11-hydroxydodecanoate + oxidized [NADPH--hemoprotein reductase] + H2O + H(+). It carries out the reaction tetradecanoate + reduced [NADPH--hemoprotein reductase] + O2 = 9-hydroxytetradecanoate + oxidized [NADPH--hemoprotein reductase] + H2O + H(+). It catalyses the reaction tetradecanoate + reduced [NADPH--hemoprotein reductase] + O2 = 10-hydroxytetradecanoate + oxidized [NADPH--hemoprotein reductase] + H2O + H(+). The catalysed reaction is tetradecanoate + reduced [NADPH--hemoprotein reductase] + O2 = 11-hydroxytetradecanoate + oxidized [NADPH--hemoprotein reductase] + H2O + H(+). The enzyme catalyses tetradecanoate + reduced [NADPH--hemoprotein reductase] + O2 = 12-hydroxytetradecanoate + oxidized [NADPH--hemoprotein reductase] + H2O + H(+). It carries out the reaction (5Z,8Z,11Z,14Z)-eicosatetraenoate + reduced [NADPH--hemoprotein reductase] + O2 = (14S,15R)-epoxy-(5Z,8Z,11Z)-eicosatrienoate + oxidized [NADPH--hemoprotein reductase] + H2O + H(+). A cytochrome P450 monooxygenase that catalyzes the in-chain oxidation of fatty acids. Catalyzes the hydroxylation of carbon-hydrogen bonds. Hydroxylates lauric and myristic acids predominantly at the omega-4 and omega-2 positions, respectively. Catalyzes the epoxidation of double bonds of polyunsaturated fatty acids (PUFA). Displays an absolute stereoselectivity in the epoxidation of arachidonic acid producing the 14(S),15(R)-epoxyeicosatrienoic acid (EET) enantiomer. Mechanistically, uses molecular oxygen inserting one oxygen atom into a substrate, and reducing the second into a water molecule, with two electrons provided by NADPH via cytochrome P450 reductase (CPR; NADPH-ferrihemoprotein reductase). The protein is Cytochrome P450 4Z1 of Homo sapiens (Human).